The following is a 1807-amino-acid chain: Nucleoporin nup189 (1807 aa).

Positions 1-118 are disordered; it reads MFGQNNSSGF…SGGGLFGSNT (118 aa). GLFG repeat units follow at residues 26–29 and 66–69; these read GLFG. Polar residues predominate over residues 29 to 61; it reads GSNSNTPGNTLFGSQNTSTTGFGQNTTQPLFGS. Residues 62–77 are compositionally biased toward low complexity; the sequence is NTNGGLFGNRNNTTTT. Residues 78-90 are compositionally biased toward gly residues; that stretch reads GGTGFGMSSGTGM. Residues 93–108 are compositionally biased toward polar residues; sequence QSNTPAFGGTNNATNP. 10 GLFG repeats span residues 112–115, 152–155, 177–180, 308–311, 335–338, 350–353, 381–384, 399–402, 435–438, and 521–524; these read GLFG. Positions 565–584 are enriched in polar residues; that stretch reads PGTGLFGSTQTNNATSNTGT. The segment at 565 to 685 is disordered; the sequence is PGTGLFGSTQ…SSTTSQVAPT (121 aa). GLFG repeat units follow at residues 585 to 588, 611 to 614, 627 to 630, and 646 to 649; these read GLFG. Over residues 588-600 the composition is skewed to low complexity; it reads GSNNANTTNTGGS. The span at 603–644 shows a compositional bias: polar residues; that stretch reads NKPSTTTGGLFGNTTAQQPSTTTSGLFGASNTNNQAQTSNFG. The segment covering 653–663 has biased composition (low complexity); it reads AGQQQQPLQAS. Over residues 664 to 685 the composition is skewed to polar residues; that stretch reads IDQNPYGNNPLFSSTTSQVAPT. Ser724 is subject to Phosphoserine. The segment at 785 to 814 is disordered; sequence QNGVKNGNDAKSDSKVQEKAPQNEADGSLK. Residues 792 to 802 show a composition bias toward basic and acidic residues; that stretch reads NDAKSDSKVQE. The Peptidase S59 domain occupies 822–963; sequence SDDYWMKPSI…GKWIFKVQHF (142 aa). The interval 974 to 1020 is disordered; sequence EENDMSSTSNEAGNLKKYDQPNLKVSGKNDSFVTHHTPGAFPNDSKN. Position 1051 is a phosphoserine (Ser1051). The segment at 1082-1104 is disordered; it reads KENNVPLSEDDLSNSSESSNESV. Positions 1094-1104 are enriched in low complexity; that stretch reads SNSSESSNESV.

The protein belongs to the nucleoporin GLFG family. Interacts (via G-L-F-G repeats) with rpn15/dss1. Interacts with raf1. As to quaternary structure, interacts with ned1. Nup189 is autocatalytically cleaved in nup98 and nup96.

The protein resides in the nucleus. The protein localises to the nuclear pore complex. Its function is as follows. Functions as a component of the nuclear pore complex (NPC). NPC components, collectively referred to as nucleoporins (NUPs), can play the role of both NPC structural components and of docking or interaction partners for transiently associated nuclear transport factors. Active directional transport is assured by both, a Phe-Gly (FG) repeat affinity gradient for these transport factors across the NPC and a transport cofactor concentration gradient across the nuclear envelope. Nup189 is autocatalytically cleaved in vivo in 2 polypeptides which assume different functions in the NPC. Nup98 as one of the FG repeat nucleoporins participates in karyopherin interactions and contains part of the autocatalytic cleavage activity. Nup96 as part of the NUP84 complex is involved in nuclear poly(A)+ RNA and tRNA export. This chain is Nucleoporin nup189 (nup189), found in Schizosaccharomyces pombe (strain 972 / ATCC 24843) (Fission yeast).